Reading from the N-terminus, the 421-residue chain is Glutamate-1-semialdehyde 2,1-aminomutase (421 aa).

The residue at position 261 (K261) is an N6-(pyridoxal phosphate)lysine.

It belongs to the class-III pyridoxal-phosphate-dependent aminotransferase family. HemL subfamily. Requires pyridoxal 5'-phosphate as cofactor.

The protein resides in the cytoplasm. It catalyses the reaction (S)-4-amino-5-oxopentanoate = 5-aminolevulinate. It participates in porphyrin-containing compound metabolism; protoporphyrin-IX biosynthesis; 5-aminolevulinate from L-glutamyl-tRNA(Glu): step 2/2. This Thermoplasma acidophilum (strain ATCC 25905 / DSM 1728 / JCM 9062 / NBRC 15155 / AMRC-C165) protein is Glutamate-1-semialdehyde 2,1-aminomutase (hemL).